The chain runs to 471 residues: UDP-N-acetylmuramate--L-alanine ligase (471 aa).

114–120 contributes to the ATP binding site; the sequence is GTHGKTT.

Belongs to the MurCDEF family.

It is found in the cytoplasm. It carries out the reaction UDP-N-acetyl-alpha-D-muramate + L-alanine + ATP = UDP-N-acetyl-alpha-D-muramoyl-L-alanine + ADP + phosphate + H(+). It participates in cell wall biogenesis; peptidoglycan biosynthesis. Functionally, cell wall formation. This Chlorobaculum parvum (strain DSM 263 / NCIMB 8327) (Chlorobium vibrioforme subsp. thiosulfatophilum) protein is UDP-N-acetylmuramate--L-alanine ligase.